Here is a 1820-residue protein sequence, read N- to C-terminus: Afadin (1820 aa).

The Ras-associating 1 domain maps to 39-133 (FHGVMRFYFQ…GRFVLKNEND (95 aa)). The tract at residues 129–196 (KNENDAIPAK…PSQGDDSENS (68 aa)) is disordered. Residues 146-186 (EKQEKEGVIQNFKRTLSKKEKKEKKKKEKEALRQASDKEER) are a coiled coil. The segment covering 160–172 (TLSKKEKKEKKKK) has biased composition (basic residues). The span at 173-189 (EKEALRQASDKEERPSQ) shows a compositional bias: basic and acidic residues. Phosphoserine is present on residues Ser-216, Ser-246, and Ser-256. In terms of domain architecture, Ras-associating 2 spans 246-348 (SGGTLRIYAD…LVFQLKRRPP (103 aa)). A compositionally biased stretch (basic and acidic residues) spans 356–371 (KKHVEGKSLKGKDRAD). The tract at residues 356 to 377 (KKHVEGKSLKGKDRADGSGYGS) is disordered. Phosphoserine occurs at positions 391 and 424. Residues 426–492 (TEVGTEKFDD…LQSGMRLQFG (67 aa)) enclose the FHA domain. Residues Ser-512, Ser-557, Ser-562, Ser-655, Ser-1083, Ser-1107, Ser-1126, Ser-1140, Ser-1143, Ser-1172, Ser-1173, Ser-1182, and Ser-1199 each carry the phosphoserine modification. The disordered stretch occupies residues 538–569 (GDVHSGTALPASRSTTRLDSDRVSSASSTAER). In terms of domain architecture, Dilute spans 653-908 (DISPTERTHK…IENVVAVAEN (256 aa)). The region spanning 1007 to 1093 (IITVTLKKQN…VVTLEVAKQG (87 aa)) is the PDZ domain. The segment at 1107–1194 (SPMMQRISDR…GKGPYTSGTA (88 aa)) is disordered. Residues 1113–1128 (ISDRRGSGKPRPKSEG) show a composition bias toward basic and acidic residues. A compositionally biased stretch (polar residues) spans 1132–1143 (YNNSAQNGSPES). Basic and acidic residues predominate over residues 1152–1172 (SEPKKLPGDDRLMKNRADHRS). The tract at residues 1203–1222 (GNLCTEEQSPPPRPEAYPIP) is disordered. Thr-1232 is subject to Phosphothreonine. Disordered stretches follow at residues 1235–1278 (ASKS…SQEE), 1308–1527 (QSSS…KQQQ), and 1567–1716 (RLQE…LKTQ). A Phosphoserine modification is found at Ser-1238. Over residues 1252–1262 (YEEKPHVHTES) the composition is skewed to basic and acidic residues. Ser-1275 is subject to Phosphoserine. Low complexity predominate over residues 1309–1318 (SSSVESSTSS). The segment covering 1325–1337 (SSKSVTPASTLTK) has biased composition (polar residues). Ser-1328 is modified (phosphoserine). Thr-1330 is modified (phosphothreonine). Positions 1364–1373 (LPPPPPPPPV) are enriched in pro residues. A compositionally biased stretch (basic and acidic residues) spans 1407-1440 (EWKKREEHQRWYEKEKARLEEERERKRREQERKL). Residues 1410–1446 (KREEHQRWYEKEKARLEEERERKRREQERKLGQMRSQ) are a coiled coil. Polar residues predominate over residues 1443–1457 (MRSQTLNPASFSPLA). A compositionally biased stretch (basic and acidic residues) spans 1487–1503 (TIERKDLQYITISKEEL). A phosphoserine mark is found at Ser-1499 and Ser-1510. A compositionally biased stretch (basic and acidic residues) spans 1513 to 1526 (PWKRDAREKLEKQQ). Residues 1523 to 1561 (EKQQQMHIVDMLSKEIHELQNKVDRTAEESDRLRKLMLE) adopt a coiled-coil conformation. The span at 1576–1587 (EDDDEEEDDDVD) shows a compositional bias: acidic residues. Residues 1593–1665 (QRLEAERRAR…SRLEAERRRQ (73 aa)) are a coiled coil. A compositionally biased stretch (basic and acidic residues) spans 1595–1675 (LEAERRARMQ…HEEAARRLLE (81 aa)). A phosphoserine mark is found at Ser-1694, Ser-1719, Ser-1770, and Ser-1795. A disordered region spans residues 1734 to 1820 (EEEDYGPAGP…TELENELNTK (87 aa)). Positions 1759–1772 (APREAREKLTRSQD) are enriched in basic and acidic residues. The span at 1800–1820 (VSDKVKASRKLTELENELNTK) shows a compositional bias: basic and acidic residues. Lys-1803 is modified (N6-acetyllysine).

As to quaternary structure, homodimer. Interacts with F-actin, nectin and NECTIN3. Essential for the association of nectin and E-cadherin. Isoform 2/s-afadin does not interact with F-actin. Interacts with ZO-1 and occludin, but probably in an indirect manner. Interacts with RIT1, RIT2, NRXN1 and BCR. Interacts with ADAM10; the interaction locks ADAM10 at adherens junctions following ADAM10 recruitment to adherens junctions by TSPAN33. Isoform 1 is expressed only in a restricted set of epithelial structures during early embryogenesis.

It localises to the cell junction. The protein localises to the adherens junction. Its function is as follows. Belongs to an adhesion system, probably together with the E-cadherin-catenin system, which plays a role in the organization of homotypic, interneuronal and heterotypic cell-cell adherens junctions (AJs). Nectin- and actin-filament-binding protein that connects nectin to the actin cytoskeleton. May play a key role in the organization of epithelial structures of the embryonic ectoderm. Essential for the organization of adherens junctions. The polypeptide is Afadin (Mus musculus (Mouse)).